The primary structure comprises 89 residues: MASGWTHRLLLLAAVVTLGATPIAAASMEYLVTAPGYLTPNADIKITAVVTNPSSAGQLKVDLWGTRSGIQPEQHSSGKSDVRRWRSRY.

The N-terminal stretch at 1-26 (MASGWTHRLLLLAAVVTLGATPIAAA) is a signal peptide. Positions 27-57 (SMEYLVTAPGYLTPNADIKITAVVTNPSSAG) are excised as a propeptide. The tract at residues 68–89 (SGIQPEQHSSGKSDVRRWRSRY) is disordered. Positions 76 to 89 (SSGKSDVRRWRSRY) are enriched in basic and acidic residues.

Functionally, has antifungal activity against C.albicans. Has antibacterial activity against the Gram-positive bacterium S.aureus and the Gram-negative bacterium E.coli. Lacks hemolytic activity against rabbit erythrocytes. In Ixodes sinensis (Hard tick), this protein is Ixosin-B.